Here is a 668-residue protein sequence, read N- to C-terminus: UvrABC system protein B (668 aa).

The Helicase ATP-binding domain maps to 25–413; sequence NGINTGLQHQ…QNTVQQVIRP (389 aa). An ATP-binding site is contributed by 38-45; that stretch reads GVTGSGKT. Positions 91–114 match the Beta-hairpin motif; that stretch reads YYDYYQPEAYIAASDTYIEKDSSV. Residues 429–595 enclose the Helicase C-terminal domain; it reads QVEDALSEIN…TIIKNIDDML (167 aa). A UVR domain is found at 629–664; that stretch reads TKVIKALEKRMRAYAKELEFEKATTIRDKITEVKQK.

It belongs to the UvrB family. In terms of assembly, forms a heterotetramer with UvrA during the search for lesions. Interacts with UvrC in an incision complex.

The protein localises to the cytoplasm. Functionally, the UvrABC repair system catalyzes the recognition and processing of DNA lesions. A damage recognition complex composed of 2 UvrA and 2 UvrB subunits scans DNA for abnormalities. Upon binding of the UvrA(2)B(2) complex to a putative damaged site, the DNA wraps around one UvrB monomer. DNA wrap is dependent on ATP binding by UvrB and probably causes local melting of the DNA helix, facilitating insertion of UvrB beta-hairpin between the DNA strands. Then UvrB probes one DNA strand for the presence of a lesion. If a lesion is found the UvrA subunits dissociate and the UvrB-DNA preincision complex is formed. This complex is subsequently bound by UvrC and the second UvrB is released. If no lesion is found, the DNA wraps around the other UvrB subunit that will check the other stand for damage. This is UvrABC system protein B from Francisella tularensis subsp. tularensis (strain SCHU S4 / Schu 4).